A 58-amino-acid chain; its full sequence is Small ribosomal subunit protein bS21 (58 aa).

Positions I32–S42 are enriched in basic and acidic residues. The disordered stretch occupies residues I32–N58. Residues V43 to N58 show a composition bias toward basic residues.

This sequence belongs to the bacterial ribosomal protein bS21 family.

This chain is Small ribosomal subunit protein bS21, found in Lachnospira eligens (strain ATCC 27750 / DSM 3376 / VPI C15-48 / C15-B4) (Eubacterium eligens).